The following is a 486-amino-acid chain: UDP-N-acetylmuramate--L-alanine ligase (486 aa).

126 to 132 (GTHGKTT) contacts ATP.

The protein belongs to the MurCDEF family.

Its subcellular location is the cytoplasm. It catalyses the reaction UDP-N-acetyl-alpha-D-muramate + L-alanine + ATP = UDP-N-acetyl-alpha-D-muramoyl-L-alanine + ADP + phosphate + H(+). The protein operates within cell wall biogenesis; peptidoglycan biosynthesis. In terms of biological role, cell wall formation. The sequence is that of UDP-N-acetylmuramate--L-alanine ligase from Pectobacterium carotovorum subsp. carotovorum (strain PC1).